The chain runs to 117 residues: UPF0145 protein CV_4322 (117 aa).

Belongs to the UPF0145 family.

The chain is UPF0145 protein CV_4322 from Chromobacterium violaceum (strain ATCC 12472 / DSM 30191 / JCM 1249 / CCUG 213 / NBRC 12614 / NCIMB 9131 / NCTC 9757 / MK).